An 847-amino-acid chain; its full sequence is DNA ligase (847 aa).

A compositionally biased stretch (low complexity) spans 1 to 22; that stretch reads MSDTTTGSDAADAAVPATTPAD. The segment at 1 to 23 is disordered; it reads MSDTTTGSDAADAAVPATTPADL. Residues 54-58, 104-105, and Glu135 each bind NAD(+); these read DAEYD and SL. Lys137 serves as the catalytic N6-AMP-lysine intermediate. Arg158, Glu195, Lys326, and Lys350 together coordinate NAD(+). 4 residues coordinate Zn(2+): Cys444, Cys447, Cys463, and Cys469. The BRCT domain maps to 686–775; that stretch reads AAGGVLAGLA…PDAIALPEAD (90 aa). Residues 770–847 are disordered; sequence ALPEADPVPD…AEPDGPAETP (78 aa). Composition is skewed to low complexity over residues 786–807 and 819–833; these read DGGS…ATAE and PAAA…VEAG.

Belongs to the NAD-dependent DNA ligase family. LigA subfamily. Requires Mg(2+) as cofactor. It depends on Mn(2+) as a cofactor.

It carries out the reaction NAD(+) + (deoxyribonucleotide)n-3'-hydroxyl + 5'-phospho-(deoxyribonucleotide)m = (deoxyribonucleotide)n+m + AMP + beta-nicotinamide D-nucleotide.. Its function is as follows. DNA ligase that catalyzes the formation of phosphodiester linkages between 5'-phosphoryl and 3'-hydroxyl groups in double-stranded DNA using NAD as a coenzyme and as the energy source for the reaction. It is essential for DNA replication and repair of damaged DNA. The protein is DNA ligase of Clavibacter sepedonicus (Clavibacter michiganensis subsp. sepedonicus).